A 127-amino-acid chain; its full sequence is MARVKRSLNAKKKRREILKSAKGYRGQRSRLYRKAKEQWLHSMTYAYRDRRARKSEFRKLWITRINAAARMNDITYNRLIQGLRLAEIEVDRKVLADLAVNDFAAFSAICEAAKAALPADVNAPKAA.

It belongs to the bacterial ribosomal protein bL20 family.

Its function is as follows. Binds directly to 23S ribosomal RNA and is necessary for the in vitro assembly process of the 50S ribosomal subunit. It is not involved in the protein synthesizing functions of that subunit. The sequence is that of Large ribosomal subunit protein bL20 from Corynebacterium diphtheriae (strain ATCC 700971 / NCTC 13129 / Biotype gravis).